A 244-amino-acid chain; its full sequence is Complement C1q subcomponent subunit A (244 aa).

The first 22 residues, 1–22 (MEAPRGWLVISVLAISLASSVT), serve as a signal peptide directing secretion. Positions 28-94 (APDGTHGSAG…PGPSGPMGPA (67 aa)) are disordered. One can recognise a Collagen-like domain in the interval 31 to 109 (GTHGSAGIPG…KGTKGSPGNI (79 aa)). Pro-39 and Pro-45 each carry 4-hydroxyproline. 5-hydroxylysine is present on Lys-48. Lys-48 is a glycosylation site (O-linked (Gal...) hydroxylysine). A 4-hydroxyproline mark is found at Pro-54 and Pro-57. The residue at position 67 (Lys-67) is a 5-hydroxylysine. An O-linked (Gal...) hydroxylysine glycan is attached at Lys-67. 3 positions are modified to 4-hydroxyproline: Pro-73, Pro-79, and Pro-85. Residues 79–94 (PGRMGYPGPSGPMGPA) show a composition bias toward low complexity. Position 100 is a 5-hydroxylysine (Lys-100). The O-linked (Gal...) hydroxylysine glycan is linked to Lys-100. The C1q domain occupies 110 to 244 (KDQPRPAFSA…FSGFLIFPSA (135 aa)). Asn-146 is a glycosylation site (N-linked (GlcNAc...) asparagine). A disulfide bridge links Cys-172 with Cys-189. Gln-198 is a Ca(2+) binding site.

Core component of the complement C1 complex, a calcium-dependent complex composed of 1 molecule of the C1Q subcomplex, 2 molecules of C1R and 2 molecules of C1S. The C1Q subcomplex is composed 18 subunits: 3 chains of C1QA, C1QB, and C1QC trimerize to form 6 collagen-like triple helices connected to six globular ligand-recognition modules (C1q domain). Interacts with CR1 (via Sushi 24 and Sushi 25 domains). Interacts (via C-terminus) with CD33; this interaction activates CD33 inhibitory motifs. In terms of processing, O-linked glycans are assumed to be the Glc-Gal disaccharides typically found as secondary modifications of hydroxylated lysines in collagen-like domains.

It is found in the secreted. The protein resides in the cell surface. Its activity is regulated as follows. The C1Q subcomplex is inhibited by sulfated molecules, such as triterpenoid sulfates, heparan sulfate, or chondroitin sulfates. In terms of biological role, core component of the complement C1 complex, a multiprotein complex that initiates the classical pathway of the complement system, a cascade of proteins that leads to phagocytosis and breakdown of pathogens and signaling that strengthens the adaptive immune system. The classical complement pathway is initiated by the C1Q subcomplex of the C1 complex, which specifically binds IgG or IgM immunoglobulins complexed with antigens, forming antigen-antibody complexes on the surface of pathogens: C1QA, together with C1QB and C1QC, specifically recognizes and binds the Fc regions of IgG or IgM via its C1q domain. Immunoglobulin-binding activates the proenzyme C1R, which cleaves C1S, initiating the proteolytic cascade of the complement system. The C1Q subcomplex is activated by a hexamer of IgG complexed with antigens, while it is activated by a pentameric IgM. The C1Q subcomplex also recognizes and binds phosphatidylserine exposed on the surface of cells undergoing programmed cell death, possibly promoting activation of the complement system. This is Complement C1q subcomponent subunit A (C1QA) from Bos taurus (Bovine).